A 312-amino-acid polypeptide reads, in one-letter code: HPr kinase/phosphorylase (312 aa).

Residues His139 and Lys160 contribute to the active site. 154-161 (GRSGIGKS) lines the ATP pocket. Ser161 serves as a coordination point for Mg(2+). The active-site Proton acceptor; for phosphorylation activity. Proton donor; for dephosphorylation activity is Asp178. The interval 201-210 (MEIRGLGIIN) is important for the catalytic mechanism of both phosphorylation and dephosphorylation. Mg(2+) is bound at residue Glu202. Arg245 is a catalytic residue. Residues 266–271 (PISPGR) are important for the catalytic mechanism of dephosphorylation.

The protein belongs to the HPrK/P family. As to quaternary structure, homohexamer, arranged as bilayered trimers. The cofactor is Mg(2+).

It catalyses the reaction [HPr protein]-L-serine + ATP = [HPr protein]-O-phospho-L-serine + ADP + H(+). The enzyme catalyses [HPr protein]-O-phospho-L-serine + phosphate + H(+) = [HPr protein]-L-serine + diphosphate. Contrary to HPrK/P of B.subtilis and other bacteria, that of M.pneumoniae is active as a kinase at very low ATP concentrations in the absence of fructose 1,6-bisphosphate (FBP). Kinase activity is slightly activated by FBP, and inhibited by inorganic phosphate (Pi), but FBP prevents kinase inhibition by Pi. Dephosphorylation of P-Ser-HPr by M.pneumoniae HPrK/P is strictly dependent on the presence of Pi, and is inhibited by FBP. This unique mode of control of HPrK/P activity is proposed to reflect the parasitic lifestyle of M.pneumoniae, that is strictly adapted to its ecological niche on nutrient-rich human mucous membranes. Is a metabolite-sensitive enzyme that catalyzes the ATP-as well as probably the pyrophosphate-dependent phosphorylation of Ser-47 in HPr, a phosphocarrier protein of the phosphoenolpyruvate-dependent sugar phosphotransferase system (PTS). HprK/P also catalyzes the pyrophosphate-producing, inorganic phosphate-dependent dephosphorylation (phosphorolysis) of seryl-phosphorylated HPr (P-Ser-HPr). The regulatory role of HPrK/P in the physiology of M.pneumoniae is not known yet. The protein is HPr kinase/phosphorylase (hprK) of Mycoplasma pneumoniae (strain ATCC 29342 / M129 / Subtype 1) (Mycoplasmoides pneumoniae).